The primary structure comprises 155 residues: Ribonuclease H (155 aa).

The RNase H type-1 domain maps to 4–145 (ETKVIEIYTD…ADALARKAIT (142 aa)). Mg(2+)-binding residues include D13, E51, D73, and D137.

It belongs to the RNase H family. Monomer. It depends on Mg(2+) as a cofactor.

It is found in the cytoplasm. It catalyses the reaction Endonucleolytic cleavage to 5'-phosphomonoester.. Its function is as follows. Endonuclease that specifically degrades the RNA of RNA-DNA hybrids. The sequence is that of Ribonuclease H from Bartonella bacilliformis (strain ATCC 35685 / KC583 / Herrer 020/F12,63).